Consider the following 264-residue polypeptide: tRNA pseudouridine synthase A (264 aa).

The Nucleophile role is filled by Asp-51. Tyr-109 is a substrate binding site.

It belongs to the tRNA pseudouridine synthase TruA family. Homodimer.

The enzyme catalyses uridine(38/39/40) in tRNA = pseudouridine(38/39/40) in tRNA. Functionally, formation of pseudouridine at positions 38, 39 and 40 in the anticodon stem and loop of transfer RNAs. This Vibrio parahaemolyticus serotype O3:K6 (strain RIMD 2210633) protein is tRNA pseudouridine synthase A.